A 363-amino-acid polypeptide reads, in one-letter code: Chalcone synthase B (363 aa).

Cys170 is an active-site residue.

Belongs to the thiolase-like superfamily. Chalcone/stilbene synthases family.

It carries out the reaction (E)-4-coumaroyl-CoA + 3 malonyl-CoA + 3 H(+) = 2',4,4',6'-tetrahydroxychalcone + 3 CO2 + 4 CoA. It participates in secondary metabolite biosynthesis; flavonoid biosynthesis. In terms of biological role, the primary product of this enzyme is 4,2',4',6'-tetrahydroxychalcone (also termed naringenin-chalcone or chalcone) which can under specific conditions spontaneously isomerize into naringenin. The sequence is that of Chalcone synthase B (CHSB) from Ipomoea cordatotriloba (Tievine).